Reading from the N-terminus, the 239-residue chain is Leucine-rich repeat-containing protein 57 (239 aa).

Residue Gly-2 is the site of N-myristoyl glycine attachment. LRR repeat units follow at residues 39–60, 63–85, 86–107, 109–130, 132–153, 154–175, 177–197, and 202–222; these read NLRT…IIGK, LLKS…CNLK, KLET…FGQL, ALKT…LCCL, HLDV…VGEL, QAIE…ISCC, RLKV…PQSI, and QICL…RELE.

The protein resides in the membrane. This Mus musculus (Mouse) protein is Leucine-rich repeat-containing protein 57 (Lrrc57).